Here is an 863-residue protein sequence, read N- to C-terminus: Leucine--tRNA ligase (863 aa).

The 'HIGH' region motif lies at 42–52 (PYPSGKIHMGH). Residues 618–622 (KMSKS) carry the 'KMSKS' region motif. Lysine 621 lines the ATP pocket.

This sequence belongs to the class-I aminoacyl-tRNA synthetase family.

Its subcellular location is the cytoplasm. It catalyses the reaction tRNA(Leu) + L-leucine + ATP = L-leucyl-tRNA(Leu) + AMP + diphosphate. This Desulforapulum autotrophicum (strain ATCC 43914 / DSM 3382 / VKM B-1955 / HRM2) (Desulfobacterium autotrophicum) protein is Leucine--tRNA ligase.